The sequence spans 96 residues: Co-chaperonin GroES (96 aa).

The protein belongs to the GroES chaperonin family. Heptamer of 7 subunits arranged in a ring. Interacts with the chaperonin GroEL.

The protein resides in the cytoplasm. Its function is as follows. Together with the chaperonin GroEL, plays an essential role in assisting protein folding. The GroEL-GroES system forms a nano-cage that allows encapsulation of the non-native substrate proteins and provides a physical environment optimized to promote and accelerate protein folding. GroES binds to the apical surface of the GroEL ring, thereby capping the opening of the GroEL channel. This is Co-chaperonin GroES from Teredinibacter turnerae (strain ATCC 39867 / T7901).